Consider the following 253-residue polypeptide: Allene oxide cyclase 2, chloroplastic (253 aa).

A chloroplast-targeting transit peptide spans 1–77; sequence MASSAVSLQS…SQNGNIENPR (77 aa).

It belongs to the allene oxide cyclase family. Highly expressed in fully developed leaves.

It localises to the plastid. It is found in the chloroplast. The catalysed reaction is (9Z,13S,15Z)-12,13-epoxyoctadeca-9,11,15-trienoate = (9S,13S,15Z)-12-oxophyto-10,15-dienoate. Functionally, involved in the production of 12-oxo-phytodienoic acid (OPDA), a precursor of jasmonic acid. This is Allene oxide cyclase 2, chloroplastic (AOC2) from Arabidopsis thaliana (Mouse-ear cress).